The chain runs to 768 residues: U-box domain-containing protein 45 (768 aa).

The region spanning 278–352 is the U-box domain; that stretch reads VPPEELRCPI…SSWCEQNGVQ (75 aa). ARM repeat units follow at residues 454 to 497, 500 to 540, 542 to 579, 581 to 620, and 623 to 662; these read EEAR…NLAV, NRNK…CLEE, KPVI…HLST, PPNI…NLVL, and AGKD…ILCN.

In terms of assembly, binds to SD129.

It carries out the reaction S-ubiquitinyl-[E2 ubiquitin-conjugating enzyme]-L-cysteine + [acceptor protein]-L-lysine = [E2 ubiquitin-conjugating enzyme]-L-cysteine + N(6)-ubiquitinyl-[acceptor protein]-L-lysine.. The protein operates within protein modification; protein ubiquitination. Its function is as follows. Functions as an E3 ubiquitin ligase. This Arabidopsis thaliana (Mouse-ear cress) protein is U-box domain-containing protein 45 (PUB45).